The chain runs to 235 residues: Cytochrome c oxidase subunit 2 (235 aa).

Residues 1-14 (MPYPMQLGFQDATS) are Mitochondrial intermembrane-facing. Residues 15-45 (PIMEELMYFHDHTLMIVFLISSLVLYIIILM) form a helical membrane-spanning segment. The Mitochondrial matrix portion of the chain corresponds to 46 to 59 (LTTKLTHTSTMDAQ). The helical transmembrane segment at 60–87 (EVETIWTILPAVILILIALPSLRILYMM) threads the bilayer. The Mitochondrial intermembrane segment spans residues 88-235 (DEIYNPYLTV…MQSFLSYLYI (148 aa)). Cu cation contacts are provided by His-161, Cys-196, Glu-198, Cys-200, His-204, and Met-207. Glu-198 contacts Mg(2+). Phosphotyrosine is present on Tyr-218.

The protein belongs to the cytochrome c oxidase subunit 2 family. As to quaternary structure, component of the cytochrome c oxidase (complex IV, CIV), a multisubunit enzyme composed of 14 subunits. The complex is composed of a catalytic core of 3 subunits MT-CO1, MT-CO2 and MT-CO3, encoded in the mitochondrial DNA, and 11 supernumerary subunits COX4I, COX5A, COX5B, COX6A, COX6B, COX6C, COX7A, COX7B, COX7C, COX8 and NDUFA4, which are encoded in the nuclear genome. The complex exists as a monomer or a dimer and forms supercomplexes (SCs) in the inner mitochondrial membrane with NADH-ubiquinone oxidoreductase (complex I, CI) and ubiquinol-cytochrome c oxidoreductase (cytochrome b-c1 complex, complex III, CIII), resulting in different assemblies (supercomplex SCI(1)III(2)IV(1) and megacomplex MCI(2)III(2)IV(2)). Found in a complex with TMEM177, COA6, COX18, COX20, SCO1 and SCO2. Interacts with TMEM177 in a COX20-dependent manner. Interacts with COX20. Interacts with COX16. Cu cation serves as cofactor.

The protein resides in the mitochondrion inner membrane. It carries out the reaction 4 Fe(II)-[cytochrome c] + O2 + 8 H(+)(in) = 4 Fe(III)-[cytochrome c] + 2 H2O + 4 H(+)(out). Component of the cytochrome c oxidase, the last enzyme in the mitochondrial electron transport chain which drives oxidative phosphorylation. The respiratory chain contains 3 multisubunit complexes succinate dehydrogenase (complex II, CII), ubiquinol-cytochrome c oxidoreductase (cytochrome b-c1 complex, complex III, CIII) and cytochrome c oxidase (complex IV, CIV), that cooperate to transfer electrons derived from NADH and succinate to molecular oxygen, creating an electrochemical gradient over the inner membrane that drives transmembrane transport and the ATP synthase. Cytochrome c oxidase is the component of the respiratory chain that catalyzes the reduction of oxygen to water. Electrons originating from reduced cytochrome c in the intermembrane space (IMS) are transferred via the dinuclear copper A center (CU(A)) of subunit 2 and heme A of subunit 1 to the active site in subunit 1, a binuclear center (BNC) formed by heme A3 and copper B (CU(B)). The BNC reduces molecular oxygen to 2 water molecules using 4 electrons from cytochrome c in the IMS and 4 protons from the mitochondrial matrix. The chain is Cytochrome c oxidase subunit 2 (MT-CO2) from Didelphis virginiana (North American opossum).